Consider the following 78-residue polypeptide: Large ribosomal subunit protein bL31 (78 aa).

It belongs to the bacterial ribosomal protein bL31 family. Type A subfamily. Part of the 50S ribosomal subunit.

Binds the 23S rRNA. The protein is Large ribosomal subunit protein bL31 (rpmE) of Rickettsia felis (strain ATCC VR-1525 / URRWXCal2) (Rickettsia azadi).